We begin with the raw amino-acid sequence, 97 residues long: Mapk-regulated corepressor-interacting protein 1 (97 aa).

Residues 1 to 29 (MTSSPVSRVVYNGKRNSSPRSPTNSSEIF) are disordered. Residues 15–26 (RNSSPRSPTNSS) show a composition bias toward low complexity. A Phosphoserine modification is found at Ser-21. Thr-30 is subject to Phosphothreonine. Residue Tyr-41 is modified to Phosphotyrosine. Lys-79 is modified (N6-acetyllysine). Residues 80-84 (PIDLS) carry the PXDLS motif motif.

The protein belongs to the MCRIP family. As to quaternary structure, interacts (unphosphorylated form, via the PXDLS motif) with CTBP1, competitively inhibiting CTBP-ZEB1 interaction. Interacts with CTBP2. Interacts with MCRIP2. Interacts with DDX6. In terms of processing, phosphorylation by MAPK3/1 (ERK1/2) regulates MCRIP1 binding to CTBP(s). In terms of tissue distribution, widely expressed (at protein level).

Its subcellular location is the nucleus. The protein resides in the cytoplasm. It localises to the stress granule. Its function is as follows. The phosphorylation status of MCRIP1 functions as a molecular switch to regulate epithelial-mesenchymal transition. Unphosphorylated MCRIP1 binds to and inhibits the transcriptional corepressor CTBP(s). When phosphorylated by MAPK/ERK, MCRIP1 releases CTBP(s) resulting in transcriptional silencing of the E-cadherin gene and induction of epithelial-mesenchymal transition. This chain is Mapk-regulated corepressor-interacting protein 1 (Mcrip1), found in Mus musculus (Mouse).